The sequence spans 254 residues: Probable 2,4-dienoyl-CoA reductase [(2E)-enoyl-CoA-producing] (254 aa).

Position 6–38 (6–38) interacts with NADP(+); it reads VIITGGSSGMGKAMAKKQAELGWHVMVTGRNHE. Thr-100 lines the substrate pocket. Catalysis depends on Tyr-142, which acts as the Proton acceptor. Lys-157 contacts NAD(+).

This sequence belongs to the short-chain dehydrogenases/reductases (SDR) family. 2,4-dienoyl-CoA reductase subfamily.

The catalysed reaction is a 4,5-saturated-(2E)-enoyl-CoA + NADP(+) = a (2E,4E)-dienoyl-CoA + NADPH + H(+). It catalyses the reaction a (2E,4Z)-dienoyl-CoA + NADPH + H(+) = a 4,5-saturated-(2E)-enoyl-CoA + NADP(+). The protein operates within lipid metabolism; fatty acid beta-oxidation. Its function is as follows. Auxiliary enzyme of beta-oxidation. It participates in the metabolism of unsaturated fatty enoyl-CoA esters having double bonds in both even- and odd-numbered positions. Catalyzes the NADP-dependent reduction of 2,4-dienoyl-CoA to yield trans-3-enoyl-CoA. This is Probable 2,4-dienoyl-CoA reductase [(2E)-enoyl-CoA-producing] (fadH) from Bacillus subtilis (strain 168).